A 126-amino-acid polypeptide reads, in one-letter code: Small ribosomal subunit protein uS13 (126 aa).

Positions 99-126 are disordered; that stretch reads LRGQSTKNNARTRKGKKKTVANKKKATK. The segment covering 108–126 has biased composition (basic residues); sequence ARTRKGKKKTVANKKKATK.

This sequence belongs to the universal ribosomal protein uS13 family. Part of the 30S ribosomal subunit. Forms a loose heterodimer with protein S19. Forms two bridges to the 50S subunit in the 70S ribosome.

Its function is as follows. Located at the top of the head of the 30S subunit, it contacts several helices of the 16S rRNA. In the 70S ribosome it contacts the 23S rRNA (bridge B1a) and protein L5 of the 50S subunit (bridge B1b), connecting the 2 subunits; these bridges are implicated in subunit movement. Contacts the tRNAs in the A and P-sites. The polypeptide is Small ribosomal subunit protein uS13 (Porphyromonas gingivalis (strain ATCC 33277 / DSM 20709 / CIP 103683 / JCM 12257 / NCTC 11834 / 2561)).